We begin with the raw amino-acid sequence, 271 residues long: ATP synthase subunit a (271 aa).

5 helical membrane-spanning segments follow: residues 40–60 (TINIDSMFFSVVLGLLFLVLF), 100–120 (LIAPLALTIFVWVFLMNLMDL), 146–166 (DVNVTLSMALGVFILILFYSI), 220–240 (LIFILIAGLLPWWSQWILNVP), and 242–262 (AIFHILIITLQAFIFMVLTIV).

Belongs to the ATPase A chain family. As to quaternary structure, F-type ATPases have 2 components, CF(1) - the catalytic core - and CF(0) - the membrane proton channel. CF(1) has five subunits: alpha(3), beta(3), gamma(1), delta(1), epsilon(1). CF(0) has three main subunits: a(1), b(2) and c(9-12). The alpha and beta chains form an alternating ring which encloses part of the gamma chain. CF(1) is attached to CF(0) by a central stalk formed by the gamma and epsilon chains, while a peripheral stalk is formed by the delta and b chains.

It is found in the cell inner membrane. Functionally, key component of the proton channel; it plays a direct role in the translocation of protons across the membrane. The sequence is that of ATP synthase subunit a from Escherichia coli O1:K1 / APEC.